A 167-amino-acid chain; its full sequence is uncharacterized protein (167 aa).

The protein resides in the virion. This is an uncharacterized protein from Acanthamoeba polyphaga (Amoeba).